We begin with the raw amino-acid sequence, 409 residues long: Multidrug efflux pump Tap (409 aa).

The next 12 helical transmembrane spans lie at 10–30, 46–66, 80–98, 104–123, 144–168, 174–193, 218–240, 260–282, 289–308, 313–335, 348–370, and 375–397; these read LLIL…IVAF, IVAM…GAAV, LLSA…IFGV, AVLA…GMTA, SVYE…IATL, MWVT…VLRL, FVWY…GLYM, LGWV…AVMS, ATML…IAFL, LILV…YNYV, VVGV…AGPL, and GLHA…AVFL.

It belongs to the major facilitator superfamily. Drug:H(+) antiporter-3 (DHA3) (TC 2.A.1.21) family.

It localises to the cell inner membrane. Efflux activity is inhibited by carbonyl cyanide m-chlorophenylhydrazone (CCCP) and reserpine, but not by o-vanadate or chlorpromazine (CPZ). Its function is as follows. Efflux pump that contributes to intrinsic antibiotic resistance. The pump uses the electrochemical gradient as a source of energy. Confers low-level resistance to tetracycline and to several aminoglycosides, including streptomycin, gentamicin, 2'-N-ethylnetilmicin and 6'-N-ethylnetilmicin. The chain is Multidrug efflux pump Tap from Mycolicibacterium fortuitum (Mycobacterium fortuitum).